The primary structure comprises 273 residues: Outer surface protein A (273 aa).

The signal sequence occupies residues 1–16 (MKKYLLGIGLILALIA). A lipid anchor (N-palmitoyl cysteine) is attached at cysteine 17. Cysteine 17 is lipidated: S-diacylglycerol cysteine.

This sequence belongs to the OspA lipoprotein family.

It is found in the cell outer membrane. The protein localises to the cell surface. This is Outer surface protein A from Borreliella burgdorferi (Lyme disease spirochete).